We begin with the raw amino-acid sequence, 445 residues long: FAS-associated factor 2 (445 aa).

At Ala-2 the chain carries N-acetylalanine. The 37-residue stretch at 12–48 (EQTEKLLQFQDLTGIESMDQCRHTLEQHNWNIEAAVQ) folds into the UBA domain. An N6-acetyllysine modification is found at Lys-167. Positions 275 to 350 (SERLEREERN…EEKERKLECL (76 aa)) form a coiled coil. The segment at 299–361 (ASLRADQEKE…PEPSPDDPES (63 aa)) is disordered. Residues 303–348 (ADQEKERKKREERERKRRKEEEVQQQKLAEERRRQNLQEEKERKLE) are compositionally biased toward basic and acidic residues. The region spanning 357–439 (DDPESVKIIF…GLSHTEVLFV (83 aa)) is the UBX domain.

As to quaternary structure, identified in a complex that contains SEL1L, OS9, FAF2/UBXD8, UBE2J1/UBC6E and AUP1. Interacts with YOD1. Interacts (via N-terminus) with UBQLN2 (via C-terminus). Interacts with PNPLA2 and UBAC2. Interacts with ZFAND2B; probably through VCP. Interacts with LMBR1L. As to expression, broadly expressed, with highest levels in brain.

The protein localises to the cytoplasm. It localises to the lipid droplet. The protein resides in the endoplasmic reticulum. Functionally, plays an important role in endoplasmic reticulum-associated degradation (ERAD) that mediates ubiquitin-dependent degradation of misfolded endoplasmic reticulum proteins. By controlling the steady-state expression of the IGF1R receptor, indirectly regulates the insulin-like growth factor receptor signaling pathway. Involved in inhibition of lipid droplet degradation by binding to phospholipase PNPL2 and inhibiting its activity by promoting dissociation of PNPL2 from its endogenous activator, ABHD5 which inhibits the rate of triacylglycerol hydrolysis. Involved in stress granule disassembly: associates with ubiquitinated G3BP1 in response to heat shock, thereby promoting interaction between ubiquitinated G3BP1 and VCP, followed by G3BP1 extraction from stress granules and stress granule disassembly. This chain is FAS-associated factor 2, found in Homo sapiens (Human).